The primary structure comprises 637 residues: Phosphomethylpyrimidine synthase (637 aa).

Substrate-binding positions include Asn242, Met271, Tyr300, His336, 356 to 358, 397 to 400, and Glu436; these read SRG and DGLR. His440 serves as a coordination point for Zn(2+). Position 463 (Tyr463) interacts with substrate. A Zn(2+)-binding site is contributed by His504. Residues Cys584, Cys587, and Cys592 each coordinate [4Fe-4S] cluster.

The protein belongs to the ThiC family. Homodimer. The cofactor is [4Fe-4S] cluster.

The catalysed reaction is 5-amino-1-(5-phospho-beta-D-ribosyl)imidazole + S-adenosyl-L-methionine = 4-amino-2-methyl-5-(phosphooxymethyl)pyrimidine + CO + 5'-deoxyadenosine + formate + L-methionine + 3 H(+). It functions in the pathway cofactor biosynthesis; thiamine diphosphate biosynthesis. Its function is as follows. Catalyzes the synthesis of the hydroxymethylpyrimidine phosphate (HMP-P) moiety of thiamine from aminoimidazole ribotide (AIR) in a radical S-adenosyl-L-methionine (SAM)-dependent reaction. The chain is Phosphomethylpyrimidine synthase from Herminiimonas arsenicoxydans.